The sequence spans 209 residues: Large ribosomal subunit protein uL3 (209 aa).

A disordered region spans residues 127 to 164 (NFSGGQRTHGQSDRLRAPGSVGGASDPSRTFKGTKMGG).

The protein belongs to the universal ribosomal protein uL3 family. In terms of assembly, part of the 50S ribosomal subunit. Forms a cluster with proteins L14 and L19.

Functionally, one of the primary rRNA binding proteins, it binds directly near the 3'-end of the 23S rRNA, where it nucleates assembly of the 50S subunit. The polypeptide is Large ribosomal subunit protein uL3 (Chlorobium phaeobacteroides (strain BS1)).